The sequence spans 340 residues: MDFIDEVKLYLKAGDGGDGCVSFRREKFVEFGGPNGGNGGKGGNIVFVSDANLNTLLNFRYRRHVKAGSGKSGASRDRSGTAGKNIVLKVPVGTQIIDEESEKIILDFNKPDMEFLIAQGGKGGLGNTNFKSSINRAPRHFTCGQFGEEKYVVLKLKVLSDVGIIGMPNAGKSKFLTRCSNADTKVGDYPFTTIKPHLGVAKVDNSEVVIVDIPGIITDAHLGIGLGHKFLKHVERCKILLHLIDVTHDNVVSAYNCMRNELELYNSDLVKKEEIIVLNKCDLLRKVEIFEKKNHLANYLNKEVLCLSIGEDLQPILRLLNEKLKKGSSKKVDVYDPFKR.

The 159-residue stretch at 1 to 159 folds into the Obg domain; the sequence is MDFIDEVKLY…KYVVLKLKVL (159 aa). The region spanning 160 to 329 is the OBG-type G domain; sequence SDVGIIGMPN…LNEKLKKGSS (170 aa). GTP contacts are provided by residues 166-173, 191-195, 212-215, 279-282, and 310-312; these read GMPNAGKS, FTTIK, DIPG, NKCD, and GED. Mg(2+) contacts are provided by serine 173 and threonine 193.

Belongs to the TRAFAC class OBG-HflX-like GTPase superfamily. OBG GTPase family. As to quaternary structure, monomer. Mg(2+) is required as a cofactor.

The protein localises to the cytoplasm. In terms of biological role, an essential GTPase which binds GTP, GDP and possibly (p)ppGpp with moderate affinity, with high nucleotide exchange rates and a fairly low GTP hydrolysis rate. Plays a role in control of the cell cycle, stress response, ribosome biogenesis and in those bacteria that undergo differentiation, in morphogenesis control. The protein is GTPase Obg of Wolbachia sp. subsp. Brugia malayi (strain TRS).